Here is an 85-residue protein sequence, read N- to C-terminus: Small ribosomal subunit protein uS12m (85 aa).

It belongs to the universal ribosomal protein uS12 family.

The protein localises to the mitochondrion matrix. The protein resides in the kinetoplast. Protein S12 is involved in the translation initiation step. The sequence is that of Small ribosomal subunit protein uS12m (RPS12) from Leishmania tarentolae (Sauroleishmania tarentolae).